The chain runs to 514 residues: Peptide chain release factor 3 (514 aa).

Residues 8 to 268 form the tr-type G domain; the sequence is KKRRTFAIIS…TFLEFAPEPH (261 aa). Residues 17–24, 85–89, and 139–142 each bind GTP; these read SHPDAGKT, DTPGH, and NKLD.

It belongs to the TRAFAC class translation factor GTPase superfamily. Classic translation factor GTPase family. PrfC subfamily.

Its subcellular location is the cytoplasm. Functionally, increases the formation of ribosomal termination complexes and stimulates activities of RF-1 and RF-2. It binds guanine nucleotides and has strong preference for UGA stop codons. It may interact directly with the ribosome. The stimulation of RF-1 and RF-2 is significantly reduced by GTP and GDP, but not by GMP. This is Peptide chain release factor 3 from Streptococcus pyogenes serotype M18 (strain MGAS8232).